The following is a 573-amino-acid chain: Arylsulfatase I (573 aa).

The first 23 residues, 1 to 23 (MHALTGLSLVSLLSFGYLSWDWA), serve as a signal peptide directing secretion. Ca(2+)-binding residues include aspartate 56, aspartate 57, and cysteine 94. Catalysis depends on cysteine 94, which acts as the Nucleophile. Cysteine 94 is modified (3-oxoalanine (Cys)). Substrate is bound at residue lysine 148. Residue histidine 150 is part of the active site. Histidine 240 provides a ligand contact to substrate. N-linked (GlcNAc...) asparagine glycosylation is found at asparagine 277 and asparagine 289. 2 residues coordinate Ca(2+): aspartate 298 and asparagine 299. Lysine 316 serves as a coordination point for substrate. Asparagine 467 and asparagine 497 each carry an N-linked (GlcNAc...) asparagine glycan. Positions 516-550 (FNGGAWGPWASDEEEEEEEEEAGRARSFSRGRRKK) are disordered. A compositionally biased stretch (acidic residues) spans 526–536 (SDEEEEEEEEE).

The protein belongs to the sulfatase family. It depends on Ca(2+) as a cofactor. The oxidation of Cys-94 residue to 3-oxoalanine (also known as C(alpha)-formylglycine) by SUMF1/Sulfatase-modifying factor 1, seems critical for catalytic activity.

Its subcellular location is the secreted. It localises to the endoplasmic reticulum. Its function is as follows. Displays arylsulfatase activity at neutral pH, when co-expressed with SUMF1; arylsulfatase activity is measured in the secretion medium of retinal cell line, but no activity is recorded when measured in cell extracts. The polypeptide is Arylsulfatase I (ARSI) (Canis lupus familiaris (Dog)).